A 248-amino-acid polypeptide reads, in one-letter code: Transcriptional activator protein FnrL (248 aa).

The region spanning lysine 154–alanine 232 is the HTH crp-type domain. The segment at residues arginine 191–serine 210 is a DNA-binding region (H-T-H motif).

In terms of biological role, anaerobic regulatory protein; transcriptional activator of hemA. Appears to regulate other genes. The protein is Transcriptional activator protein FnrL (fnrL) of Cereibacter sphaeroides (strain ATCC 17023 / DSM 158 / JCM 6121 / CCUG 31486 / LMG 2827 / NBRC 12203 / NCIMB 8253 / ATH 2.4.1.) (Rhodobacter sphaeroides).